Reading from the N-terminus, the 215-residue chain is Large ribosomal subunit protein uL4c (215 aa).

The span at 48-57 (SQRQGTISTK) shows a compositional bias: polar residues. The segment at 48-85 (SQRQGTISTKTRSEVRGGGRKPWRQKGTGRARAGSSRS) is disordered. A compositionally biased stretch (basic residues) spans 65–76 (GGRKPWRQKGTG).

Belongs to the universal ribosomal protein uL4 family. As to quaternary structure, part of the 50S ribosomal subunit.

Its subcellular location is the plastid. The protein resides in the chloroplast. Functionally, probably binds the 23S rRNA. This Trieres chinensis (Marine centric diatom) protein is Large ribosomal subunit protein uL4c (rpl4).